The primary structure comprises 1340 residues: Serine/threonine-protein phosphatase 7 long form homolog (1340 aa).

Mn(2+) contacts are provided by D660 and H662. Residue H722 is the Proton donor of the active site. H773 is a binding site for Mn(2+). Disordered stretches follow at residues 788 to 814, 1012 to 1093, 1196 to 1218, and 1266 to 1340; these read QERNRKRKRTQKKQTDNTVLDTEDRSE, KSMD…SRTR, TDGAENLEPSTSKLNYSEPSEDI, and FTNL…DMDS. Over residues 790-799 the composition is skewed to basic residues; sequence RNRKRKRTQK. A compositionally biased stretch (acidic residues) spans 1018–1027; the sequence is EQMEVDEKDD. Positions 1049–1080 are enriched in basic and acidic residues; sequence GDRDMVDFSDKTENGSKEADHSETAEISKDLS. The segment covering 1203–1213 has biased composition (polar residues); sequence EPSTSKLNYSE. Basic and acidic residues-rich tracts occupy residues 1266 to 1289 and 1318 to 1328; these read FTNLTKPSHDKGYGESADKPERVI and DSVDSKNKGSL.

It belongs to the PPP phosphatase family. PP-7 subfamily. Mn(2+) is required as a cofactor. Expressed in root tips, the shoot apical meristem (SAM), leaf vasculature, hydathodes and mature flowers.

It is found in the nucleus. The enzyme catalyses O-phospho-L-seryl-[protein] + H2O = L-seryl-[protein] + phosphate. It carries out the reaction O-phospho-L-threonyl-[protein] + H2O = L-threonyl-[protein] + phosphate. Maybe required to maintain cell division activity in meristematic cells. The sequence is that of Serine/threonine-protein phosphatase 7 long form homolog from Arabidopsis thaliana (Mouse-ear cress).